The primary structure comprises 183 residues: Regulatory protein RecX (183 aa).

A compositionally biased stretch (polar residues) spans 1–12; sequence MTSFPHPSTSES. Residues 1 to 26 are disordered; it reads MTSFPHPSTSESGPDPDSEPNREEQA.

It belongs to the RecX family.

Its subcellular location is the cytoplasm. Functionally, modulates RecA activity. The chain is Regulatory protein RecX from Mycobacterium sp. (strain KMS).